A 363-amino-acid polypeptide reads, in one-letter code: MNELLLNLVDPLHQWFLGLGDGGVVLWSVLKILLIAVPVIVSVAFYVVWERKLIGWMHVRHGPMYVGMGIFQAFADVFKLLFKEILQPSSSHKAMFIIAPLLTLAPAFAAWSVVPFDAKLVLSNANVGLLYLLAMTSLGVYGIILAGWASNSKYAFLGAMRSAAQVVSYEIAMGFALVGVMIASGSVNLSQIVFAQAGNSGFFDWFLIPLFPLFIVYWVSGVAETNRAPFDVVEGESEIVAGHMVEYSGGAFALFFLAEYANMILVSFLISIFFLGGWLSPIQGWVNADISPWIDWLWKGGWPWLLMKVFFFASAYIWFRASFPRYRYDQIMRLGWKVFIPLTIVWIAVTALMVFYGVIQKGV.

The next 10 helical transmembrane spans lie at 29-49 (VLKILLIAVPVIVSVAFYVVW), 62-82 (GPMYVGMGIFQAFADVFKLLF), 96-116 (FIIAPLLTLAPAFAAWSVVPF), 127-147 (VGLLYLLAMTSLGVYGIILAG), 163-183 (AAQVVSYEIAMGFALVGVMIA), 202-222 (FFDWFLIPLFPLFIVYWVSGV), 238-257 (EIVAGHMVEYSGGAFALFFL), 264-286 (ILVSFLISIFFLGGWLSPIQGWV), 299-319 (KGGWPWLLMKVFFFASAYIWF), and 339-359 (FIPLTIVWIAVTALMVFYGVI).

It belongs to the complex I subunit 1 family. In terms of assembly, NDH-1 is composed of 14 different subunits. Subunits NuoA, H, J, K, L, M, N constitute the membrane sector of the complex.

Its subcellular location is the cell inner membrane. The catalysed reaction is a quinone + NADH + 5 H(+)(in) = a quinol + NAD(+) + 4 H(+)(out). Functionally, NDH-1 shuttles electrons from NADH, via FMN and iron-sulfur (Fe-S) centers, to quinones in the respiratory chain. The immediate electron acceptor for the enzyme in this species is believed to be ubiquinone. Couples the redox reaction to proton translocation (for every two electrons transferred, four hydrogen ions are translocated across the cytoplasmic membrane), and thus conserves the redox energy in a proton gradient. This subunit may bind ubiquinone. This is NADH-quinone oxidoreductase subunit H from Xanthomonas oryzae pv. oryzae (strain PXO99A).